A 204-amino-acid chain; its full sequence is Ribonuclease HII (204 aa).

An RNase H type-2 domain is found at 1–197 (MILGIDEAGR…KNRILNPKLL (197 aa)). Residues D6, E7, and D103 each coordinate a divalent metal cation.

The protein belongs to the RNase HII family. Mn(2+) serves as cofactor. Mg(2+) is required as a cofactor.

The protein localises to the cytoplasm. The catalysed reaction is Endonucleolytic cleavage to 5'-phosphomonoester.. Its function is as follows. Endonuclease that specifically degrades the RNA of RNA-DNA hybrids. The chain is Ribonuclease HII from Helicobacter pylori (strain G27).